Here is a 372-residue protein sequence, read N- to C-terminus: tRNA-specific 2-thiouridylase MnmA (372 aa).

Residues 16 to 23 (GMSGGVDS) and M42 each bind ATP. The segment at 102–104 (NPD) is interaction with target base in tRNA. The active-site Nucleophile is C107. A disulfide bridge links C107 with C205. G132 is a binding site for ATP. The interaction with tRNA stretch occupies residues 155–157 (KDQ). The active-site Cysteine persulfide intermediate is C205. The interval 317–318 (RY) is interaction with tRNA.

It belongs to the MnmA/TRMU family.

The protein resides in the cytoplasm. The enzyme catalyses S-sulfanyl-L-cysteinyl-[protein] + uridine(34) in tRNA + AH2 + ATP = 2-thiouridine(34) in tRNA + L-cysteinyl-[protein] + A + AMP + diphosphate + H(+). In terms of biological role, catalyzes the 2-thiolation of uridine at the wobble position (U34) of tRNA, leading to the formation of s(2)U34. The protein is tRNA-specific 2-thiouridylase MnmA of Shewanella baltica (strain OS223).